A 918-amino-acid polypeptide reads, in one-letter code: GPI ethanolamine phosphate transferase 3 (918 aa).

The chain crosses the membrane as a helical span at residues 16–36; that stretch reads IGTWKYIQACIFFAIILISNF. N-linked (GlcNAc...) asparagine glycosylation is found at Asn-54, Asn-71, Asn-101, Asn-197, and Asn-399. 15 helical membrane passes run 429–449, 459–479, 486–506, 523–543, 547–563, 567–587, 616–636, 651–671, 687–707, 715–735, 738–758, 762–782, 813–833, 853–873, and 887–907; these read LFPMIIGFLLLIIGGFNLALL, MSANMAPSVMKCLPVCLILIL, SPFPAEFYVLLPSFYILLNSF, FSIFITFLHVCSFGSNSFTVW, LCHFLIITIGLVMFCKC, MSPLFACSTYSALAFILLQVI, TLIVLALMALSSIILPLILQL, LSILYFFELISSIFWIAHHVF, SLANTYVICILGVLIWQFFLL, INVIERSYFVFALLYSFLSFL, PLGHLSLFSCFLQILLLIQLK, PSVGHNFFSVTLGLLGLSHFF, IFMFLHTVGAPILTCISIPLF, FSFILYNLLISTSTVFFAGFF, and FMLSGILLVTHQLFVLIQCFG.

The protein belongs to the PIGG/PIGN/PIGO family. PIGO subfamily. In terms of processing, glycosylated.

The protein localises to the endoplasmic reticulum membrane. It functions in the pathway glycolipid biosynthesis; glycosylphosphatidylinositol-anchor biosynthesis. In terms of biological role, involved in glycosylphosphatidylinositol-anchor biosynthesis. Transfers ethanolamine phosphate to the GPI third mannose which links the GPI-anchor to the C-terminus of the proteins by an amide bond. Involved in cell wall biosynthesis. This chain is GPI ethanolamine phosphate transferase 3 (gpi13), found in Schizosaccharomyces pombe (strain 972 / ATCC 24843) (Fission yeast).